The chain runs to 104 residues: Gallinacin-11 (104 aa).

Positions 1-22 (MKLFSCLMALLLFLLQAVPGLG) are cleaved as a signal peptide. 3 disulfides stabilise this stretch: cysteine 30–cysteine 60, cysteine 37–cysteine 53, and cysteine 43–cysteine 61.

Belongs to the beta-defensin family. As to expression, detected in outer membrane of the vitelline layer of the egg (at protein level). Expressed in the liver, gall bladder, kidney, testis, ovary and male and female reproductive tracts. Expressed in the ovarian stroma, but not in the ovarian follicles. No expression is detected in bone marrow.

It localises to the secreted. The protein localises to the cytoplasmic granule. Has bactericidal activity. The chain is Gallinacin-11 (GAL11) from Gallus gallus (Chicken).